The following is a 733-amino-acid chain: Phosphoribosylformylglycinamidine synthase subunit PurL (733 aa).

His41 is an active-site residue. ATP is bound by residues Tyr44 and Lys83. Glu85 lines the Mg(2+) pocket. Substrate contacts are provided by residues Ser86–His89 and Arg108. The active-site Proton acceptor is the His87. Asp109 contributes to the Mg(2+) binding site. The disordered stretch occupies residues Gly212–Gln232. Gln232 lines the substrate pocket. Residue Asp260 coordinates Mg(2+). Glu304–Gln306 is a binding site for substrate. Asp488 and Gly525 together coordinate ATP. Asn526 contributes to the Mg(2+) binding site. Ser528 contributes to the substrate binding site.

The protein belongs to the FGAMS family. In terms of assembly, monomer. Part of the FGAM synthase complex composed of 1 PurL, 1 PurQ and 2 PurS subunits.

It localises to the cytoplasm. The catalysed reaction is N(2)-formyl-N(1)-(5-phospho-beta-D-ribosyl)glycinamide + L-glutamine + ATP + H2O = 2-formamido-N(1)-(5-O-phospho-beta-D-ribosyl)acetamidine + L-glutamate + ADP + phosphate + H(+). Its pathway is purine metabolism; IMP biosynthesis via de novo pathway; 5-amino-1-(5-phospho-D-ribosyl)imidazole from N(2)-formyl-N(1)-(5-phospho-D-ribosyl)glycinamide: step 1/2. Its function is as follows. Part of the phosphoribosylformylglycinamidine synthase complex involved in the purines biosynthetic pathway. Catalyzes the ATP-dependent conversion of formylglycinamide ribonucleotide (FGAR) and glutamine to yield formylglycinamidine ribonucleotide (FGAM) and glutamate. The FGAM synthase complex is composed of three subunits. PurQ produces an ammonia molecule by converting glutamine to glutamate. PurL transfers the ammonia molecule to FGAR to form FGAM in an ATP-dependent manner. PurS interacts with PurQ and PurL and is thought to assist in the transfer of the ammonia molecule from PurQ to PurL. The polypeptide is Phosphoribosylformylglycinamidine synthase subunit PurL (Caldanaerobacter subterraneus subsp. tengcongensis (strain DSM 15242 / JCM 11007 / NBRC 100824 / MB4) (Thermoanaerobacter tengcongensis)).